A 156-amino-acid chain; its full sequence is MSRRNRAPRRDVPPDPKYGSRLVTMLIRKLMMRGKASLAARILYEALDIVRERTGQDPLPLLENAVRNATPLVEVKARRVGGATYQVPVEVRGERGTSLALRWLVTFSRTRPGRTMAAKLANELIDAANETGSAIRRREEVHRMAEANKAFAHYRY.

The protein belongs to the universal ribosomal protein uS7 family. Part of the 30S ribosomal subunit. Contacts proteins S9 and S11.

Functionally, one of the primary rRNA binding proteins, it binds directly to 16S rRNA where it nucleates assembly of the head domain of the 30S subunit. Is located at the subunit interface close to the decoding center, probably blocks exit of the E-site tRNA. In Synechococcus sp. (strain JA-2-3B'a(2-13)) (Cyanobacteria bacterium Yellowstone B-Prime), this protein is Small ribosomal subunit protein uS7.